Reading from the N-terminus, the 153-residue chain is Putative OPA3-like protein CG43998 (153 aa).

The stretch at 101–153 (ELSKTYTKTKKQNQEIEDQKRVLDECVDCISADVERNQREINWIKAALKNVEK) forms a coiled coil.

Belongs to the OPA3 family.

This is Putative OPA3-like protein CG43998 from Drosophila melanogaster (Fruit fly).